Here is a 211-residue protein sequence, read N- to C-terminus: Stromal cell-derived factor 2 (211 aa).

The N-terminal stretch at 1 to 18 (MAVVSLLLFGGLWSAVGS) is a signal peptide. MIR domains are found at residues 21-75 (LAVV…IRGK), 83-138 (GTPI…VLCN), and 139-193 (GPYW…AMEG).

Its subcellular location is the secreted. The protein is Stromal cell-derived factor 2 (SDF2) of Bos taurus (Bovine).